We begin with the raw amino-acid sequence, 715 residues long: Protein Hook homolog 1 (715 aa).

The 117-residue stretch at 6 to 122 (TVLCESLIIW…RLLQLILGCA (117 aa)) folds into the Calponin-homology (CH) domain. Coiled-coil stretches lie at residues 167–434 (AGDT…DQLL) and 463–656 (IRLQ…EEKL).

It belongs to the hook family. Interacts with microtubules.

It is found in the cytoplasm. It localises to the cytoskeleton. Its function is as follows. May function to promote vesicle trafficking and/or fusion. The polypeptide is Protein Hook homolog 1 (hook1) (Danio rerio (Zebrafish)).